A 969-amino-acid chain; its full sequence is Endogenous retrovirus group K member 11 Pol protein (969 aa).

The Reverse transcriptase domain occupies 57-245; it reads LEKGHIEPSF…TPFHYLGMQI (189 aa). The short motif at 161-164 is the LPQG element; it reads LPQG. The region spanning 460–590 is the RNase H type-1 domain; the sequence is LENALTVFTD…ADLLVSSALI (131 aa). Positions 469, 497, 517, and 582 each coordinate Mg(2+). The Integrase-type zinc-finger motif lies at 587–628; it reads SALIKAQELHALTHVNAAGLKNKFDVTWKQAKDIVQHCTQCQ. 4 residues coordinate Zn(2+): H596, H600, C624, and C627. In terms of domain architecture, Integrase catalytic spans 642-803; the sequence is RGLCPNALWQ…TSAEQHLTGK (162 aa). The integrase-type DNA-binding region spans 811 to 859; sequence KLIWWKDNKNKTWEIGKVITWGRGFACVSPGENQLPVWIPTRHLKFYNE.

This sequence belongs to the beta type-B retroviral polymerase family. HERV class-II K(HML-2) pol subfamily.

It catalyses the reaction DNA(n) + a 2'-deoxyribonucleoside 5'-triphosphate = DNA(n+1) + diphosphate. It carries out the reaction Endonucleolytic cleavage to 5'-phosphomonoester.. Early post-infection, the reverse transcriptase converts the viral RNA genome into double-stranded viral DNA. The RNase H domain of the reverse transcriptase performs two functions. It degrades the RNA template and specifically removes the RNA primer from the RNA/DNA hybrid. Following nuclear import, the integrase catalyzes the insertion of the linear, double-stranded viral DNA into the host cell chromosome. Endogenous Pol proteins may have kept, lost or modified their original function during evolution. In Homo sapiens (Human), this protein is Endogenous retrovirus group K member 11 Pol protein (ERVK-11).